A 161-amino-acid chain; its full sequence is uncharacterized protein (161 aa).

The span at 1–16 (MPRAGRAPAEGGPAPG) shows a compositional bias: low complexity. 3 disordered regions span residues 1–23 (MPRA…SRCL), 50–91 (GRPV…TQSA), and 140–161 (RGPA…WRIS).

This is an uncharacterized protein from Homo sapiens (Human).